The sequence spans 162 residues: Putative 4-hydroxy-4-methyl-2-oxoglutarate aldolase (162 aa).

Substrate-binding positions include 75–78 (GDML) and Arg-97. Position 98 (Asp-98) interacts with a divalent metal cation.

It belongs to the class II aldolase/RraA-like family. As to quaternary structure, homotrimer. It depends on a divalent metal cation as a cofactor.

It carries out the reaction 4-hydroxy-4-methyl-2-oxoglutarate = 2 pyruvate. The enzyme catalyses oxaloacetate + H(+) = pyruvate + CO2. Catalyzes the aldol cleavage of 4-hydroxy-4-methyl-2-oxoglutarate (HMG) into 2 molecules of pyruvate. Also contains a secondary oxaloacetate (OAA) decarboxylase activity due to the common pyruvate enolate transition state formed following C-C bond cleavage in the retro-aldol and decarboxylation reactions. The sequence is that of Putative 4-hydroxy-4-methyl-2-oxoglutarate aldolase from Ectopseudomonas mendocina (strain ymp) (Pseudomonas mendocina).